Consider the following 543-residue polypeptide: Carboxypeptidase Y homolog A (543 aa).

Residues 1-17 (MRVAASALLAGAASAAV) form the signal peptide. Positions 18–128 (APQQQILKFP…KLEQFDLRVK (111 aa)) are excised as a propeptide. 5 cysteine pairs are disulfide-bonded: Cys-182-Cys-421, Cys-316-Cys-330, Cys-340-Cys-363, Cys-347-Cys-356, and Cys-385-Cys-391. The N-linked (GlcNAc...) asparagine glycan is linked to Asn-213. Residue Ser-269 is part of the active site. Residue Asp-460 is part of the active site. Asn-508 is a glycosylation site (N-linked (GlcNAc...) asparagine). Residue His-519 is part of the active site.

It belongs to the peptidase S10 family.

Its subcellular location is the vacuole. The enzyme catalyses Release of a C-terminal amino acid with broad specificity.. In terms of biological role, vacuolar carboxypeptidase involved in degradation of small peptides. Digests preferentially peptides containing an aliphatic or hydrophobic residue in P1' position, as well as methionine, leucine or phenylalanine in P1 position of ester substrate. This Phaeosphaeria nodorum (strain SN15 / ATCC MYA-4574 / FGSC 10173) (Glume blotch fungus) protein is Carboxypeptidase Y homolog A (CPYA).